Consider the following 325-residue polypeptide: MSIALDSSTATAAAAPSPTRARIAALLALPLPELIFQAQTVHRQHFDPTQVQISTLLSIKTGGCPEDCGYCPQSAEFDVGVKASKLMDIAPVLEAARRAKEAGAQRFCMGAAWRSPKDHDLDRVAAMVEGVKALGMETCVTLGMLRPDQAARLKSAGLDYYNHNLDTSPEFYGSIITTRTYQDRLDTLAAVRDAGINICCGGIIGMGEDLDDRAGLLATLADLDPPPESVPINALVAVKGTKLGESAPIDPIDFVRTIAAARISMPRSWVRLSAGREALSDEAQALCFLAGANSIFYGDTLLTTANPAVARDNALFDRLGMTKLS.

Residues 49-267 (TQVQISTLLS…IAAARISMPR (219 aa)) enclose the Radical SAM core domain. The [4Fe-4S] cluster site is built by C64, C68, and C71. Residues C108, C139, C199, and R271 each coordinate [2Fe-2S] cluster.

Belongs to the radical SAM superfamily. Biotin synthase family. Homodimer. It depends on [4Fe-4S] cluster as a cofactor. [2Fe-2S] cluster serves as cofactor.

The catalysed reaction is (4R,5S)-dethiobiotin + (sulfur carrier)-SH + 2 reduced [2Fe-2S]-[ferredoxin] + 2 S-adenosyl-L-methionine = (sulfur carrier)-H + biotin + 2 5'-deoxyadenosine + 2 L-methionine + 2 oxidized [2Fe-2S]-[ferredoxin]. Its pathway is cofactor biosynthesis; biotin biosynthesis; biotin from 7,8-diaminononanoate: step 2/2. Catalyzes the conversion of dethiobiotin (DTB) to biotin by the insertion of a sulfur atom into dethiobiotin via a radical-based mechanism. The protein is Biotin synthase of Acidiphilium cryptum (strain JF-5).